The chain runs to 615 residues: Zinc finger protein 181 (615 aa).

The region spanning 48-120 is the KRAB domain; the sequence is VTFSDVAIDF…EKKLSKGLIP (73 aa). Glycyl lysine isopeptide (Lys-Gly) (interchain with G-Cter in SUMO2) cross-links involve residues lysine 153 and lysine 170. 11 C2H2-type zinc fingers span residues 281–303, 309–331, 337–359, 365–387, 393–415, 421–443, 449–471, 477–499, 505–527, 533–555, and 561–583; these read YTCSECGKAFGKQSILNRHWRIH, YECRECGKTFSHGSSLTRHLISH, YKCIECGKAFSHVSSLTNHQSTH, YECMNCGKSFSRVSHLIEHLRIH, YECRICGKAFIHRSSLIHHQKIH, YECRECGKAFCCSSHLTRHQRIH, YECNKCLKVFSSLSFLVQHQSIH, FECQKCRKSFNQLESLNMHLRNH, YECSICGKAFSHRSSLLQHHRIH, YECIKCGKTFSCSSNLTVHQRIH, and YKCNECGKAFSKGSNLTAHQRVH.

The protein belongs to the krueppel C2H2-type zinc-finger protein family.

The protein localises to the nucleus. May be involved in transcriptional regulation. The sequence is that of Zinc finger protein 181 (ZNF181) from Pongo abelii (Sumatran orangutan).